A 327-amino-acid chain; its full sequence is Probable cell division protein WhiA (327 aa).

The segment at residues 275–308 (SLEELGRLADPPMTKDAVAGRIRRLLSMADRKAK) is a DNA-binding region (H-T-H motif).

Belongs to the WhiA family.

In terms of biological role, involved in cell division and chromosome segregation. In Mycobacterium bovis (strain ATCC BAA-935 / AF2122/97), this protein is Probable cell division protein WhiA.